Reading from the N-terminus, the 191-residue chain is Probable DNA-directed RNA polymerase subunit delta (191 aa).

The region spanning 14 to 83 (LSMIEVARAI…GENKWGLRSW (70 aa)) is the HTH HARE-type domain. Residues 118–191 (DEDAIDYRDD…EDEEDEEPVL (74 aa)) form a disordered region.

This sequence belongs to the RpoE family. RNAP is composed of a core of 2 alpha, a beta and a beta' subunits. The core is associated with a delta subunit and one of several sigma factors.

Participates in both the initiation and recycling phases of transcription. In the presence of the delta subunit, RNAP displays an increased specificity of transcription, a decreased affinity for nucleic acids, and an increased efficiency of RNA synthesis because of enhanced recycling. In Streptococcus pyogenes serotype M18 (strain MGAS8232), this protein is Probable DNA-directed RNA polymerase subunit delta.